We begin with the raw amino-acid sequence, 1134 residues long: Ovochymase-1 (1134 aa).

The first 22 residues, 1 to 22, serve as a signal peptide directing secretion; the sequence is MGLLASAGLLLLLVIGHPRSLG. Residues 23-46 constitute a propeptide, activation peptide; it reads LKCGIRMVNMKSKEPAVGSRFFSR. Residues 38–296 form the Peptidase S1 1 domain; that stretch reads AVGSRFFSRI…LMDFITQNLF (259 aa). A glycan (N-linked (GlcNAc...) asparagine) is linked at Asn52. A disulfide bond links Cys72 and Cys88. The Charge relay system role is filled by His87. Asn99 carries N-linked (GlcNAc...) asparagine glycosylation. Residue Glu116 coordinates Ca(2+). The active-site Charge relay system is Asp139. Disulfide bonds link Cys173/Cys243, Cys204/Cys222, and Cys233/Cys262. Ser237 (charge relay system) is an active-site residue. CUB domains follow at residues 284 to 410 and 419 to 531; these read VSEL…VTAV and CGSL…FTIL. Asn324 is a glycosylation site (N-linked (GlcNAc...) asparagine). 3 cysteine pairs are disulfide-bonded: Cys341-Cys373, Cys419-Cys446, and Cys473-Cys494. Asn431 is a glycosylation site (N-linked (GlcNAc...) asparagine). Asn507 is a glycosylation site (N-linked (GlcNAc...) asparagine). Residues 575–812 form the Peptidase S1 2 domain; it reads IAGGEEACPH…FLDWIQSKIN (238 aa). Cys600 and Cys616 are joined by a disulfide. Active-site charge relay system residues include His615 and Asp664. 4 disulfides stabilise this stretch: Cys698–Cys769, Cys729–Cys747, Cys759–Cys788, and Cys846–Cys873. The active-site Charge relay system is the Ser763. The region spanning 846–957 is the CUB 3 domain; sequence CSEAELEKPR…GAFGISYIVL (112 aa). N-linked (GlcNAc...) asparagine glycosylation is present at Asn1106.

The protein belongs to the peptidase S1 family.

Its subcellular location is the secreted. The polypeptide is Ovochymase-1 (OVCH1) (Homo sapiens (Human)).